The chain runs to 520 residues: Protein root UVB sensitive 4 (520 aa).

2 helical membrane passes run 275-295 (IQTVCFDNLGLLLAVLLNMLF) and 301-321 (LQACLPFVLYPIFSTFDLLGI).

Belongs to the RUS1 family.

The protein localises to the membrane. The polypeptide is Protein root UVB sensitive 4 (Arabidopsis thaliana (Mouse-ear cress)).